A 336-amino-acid polypeptide reads, in one-letter code: Mitochondrial thiamine diphosphate carrier 2 (336 aa).

6 helical membrane-spanning segments follow: residues 11–27 (RRAL…GGIS), 88–105 (VPAL…FTVL), 127–150 (YLSY…FDLL), 182–199 (LYSG…YAGL), 230–246 (SVSS…AGTF), and 303–322 (GLFP…FVAY). Solcar repeat units follow at residues 11–111 (RRAL…LKTF), 124–210 (LSPY…FKRS), and 231–328 (VSSF…ISDW).

Belongs to the mitochondrial carrier (TC 2.A.29) family. As to expression, ubiquitous.

The protein localises to the mitochondrion inner membrane. Its function is as follows. Mitochondrial transporter that mediates uptake of thiamine diphosphate (ThDP) into mitochondria. This Zea mays (Maize) protein is Mitochondrial thiamine diphosphate carrier 2.